Here is a 92-residue protein sequence, read N- to C-terminus: Plasmid copy control protein CopR (92 aa).

The segment covering 1-27 (MELAFRESLKKMRGTKSKEKFSQELEM) has biased composition (basic and acidic residues). Disordered regions lie at residues 1–40 (MELAFRESLKKMRGTKSKEKFSQELEMSRSNYSRIESGKS) and 63–92 (IPNEPTEPEPETEQVTLELEMEEEKSNDFV). Residues 9-62 (LKKMRGTKSKEKFSQELEMSRSNYSRIESGKSDPTIKTLEQIVKLTNSTLVVDL) form the HTH cro/C1-type domain. A DNA-binding region (H-T-H motif) is located at residues 20-39 (KFSQELEMSRSNYSRIESGK).

Its function is as follows. Involved in copy control of plasmid pIP501. The protein is Plasmid copy control protein CopR (copR) of Streptococcus agalactiae.